Consider the following 280-residue polypeptide: Large ribosomal subunit protein uL2 (280 aa).

2 disordered regions span residues 32 to 54 (SLLVPNKSTGGRNNNGRVTSRHM) and 221 to 280 (RGMA…DSKK). Polar residues predominate over residues 37–49 (NKSTGGRNNNGRV). A compositionally biased stretch (gly residues) spans 232-242 (MGGGEGKSKSG). Over residues 257-280 (KGLKTRKRKKASSKLIVRRRDSKK) the composition is skewed to basic residues.

It belongs to the universal ribosomal protein uL2 family. In terms of assembly, part of the 50S ribosomal subunit. Forms a bridge to the 30S subunit in the 70S ribosome.

One of the primary rRNA binding proteins. Required for association of the 30S and 50S subunits to form the 70S ribosome, for tRNA binding and peptide bond formation. It has been suggested to have peptidyltransferase activity; this is somewhat controversial. Makes several contacts with the 16S rRNA in the 70S ribosome. In Chloroherpeton thalassium (strain ATCC 35110 / GB-78), this protein is Large ribosomal subunit protein uL2.